A 710-amino-acid chain; its full sequence is Polyribonucleotide nucleotidyltransferase (710 aa).

Mg(2+)-binding residues include Asp-489 and Asp-495. The region spanning 556-615 (PKIDTIKIDVDKIKVVIGKGGETIDKIIAETGVKIDIDDEGNVSIYSSDQAAIDRTKEII) is the KH domain. The 69-residue stretch at 625 to 693 (GEVYHAKVIR…EKGRVDASMK (69 aa)) folds into the S1 motif domain.

This sequence belongs to the polyribonucleotide nucleotidyltransferase family. Requires Mg(2+) as cofactor.

The protein localises to the cytoplasm. The catalysed reaction is RNA(n+1) + phosphate = RNA(n) + a ribonucleoside 5'-diphosphate. Involved in mRNA degradation. Catalyzes the phosphorolysis of single-stranded polyribonucleotides processively in the 3'- to 5'-direction. In Streptococcus pyogenes serotype M3 (strain ATCC BAA-595 / MGAS315), this protein is Polyribonucleotide nucleotidyltransferase.